A 368-amino-acid chain; its full sequence is Agmatine deiminase (368 aa).

Cysteine 357 functions as the Amidino-cysteine intermediate in the catalytic mechanism.

The protein belongs to the agmatine deiminase family. Homodimer.

The enzyme catalyses agmatine + H2O = N-carbamoylputrescine + NH4(+). The protein operates within amine and polyamine biosynthesis; putrescine biosynthesis via agmatine pathway; N-carbamoylputrescine from agmatine: step 1/1. Mediates the hydrolysis of agmatine into N-carbamoylputrescine in the arginine decarboxylase (ADC) pathway of putrescine biosynthesis, a basic polyamine. The protein is Agmatine deiminase of Pseudomonas aeruginosa (strain LESB58).